A 219-amino-acid chain; its full sequence is Chloramphenicol acetyltransferase (219 aa).

Histidine 190 acts as the Proton acceptor in catalysis.

The protein belongs to the chloramphenicol acetyltransferase family. Homotrimer.

The enzyme catalyses chloramphenicol + acetyl-CoA = chloramphenicol 3-acetate + CoA. Functionally, this enzyme is an effector of chloramphenicol resistance in bacteria. The sequence is that of Chloramphenicol acetyltransferase (catQ) from Clostridium perfringens.